Consider the following 224-residue polypeptide: tRNA (guanine-N(7)-)-methyltransferase (224 aa).

S-adenosyl-L-methionine-binding residues include E57, D82, and D109. Residue D167 participates in substrate binding.

The protein belongs to the class I-like SAM-binding methyltransferase superfamily. TrmB family.

It catalyses the reaction guanosine(46) in tRNA + S-adenosyl-L-methionine = N(7)-methylguanosine(46) in tRNA + S-adenosyl-L-homocysteine. The protein operates within tRNA modification; N(7)-methylguanine-tRNA biosynthesis. Its function is as follows. Catalyzes the formation of N(7)-methylguanine at position 46 (m7G46) in tRNA. In Chloroflexus aurantiacus (strain ATCC 29366 / DSM 635 / J-10-fl), this protein is tRNA (guanine-N(7)-)-methyltransferase.